The following is a 330-amino-acid chain: Ferredoxin--NADP reductase (330 aa).

FAD contacts are provided by Thr18, Glu37, Gln45, Tyr50, Val90, Phe124, Asp286, and Thr327.

This sequence belongs to the ferredoxin--NADP reductase type 2 family. As to quaternary structure, homodimer. Requires FAD as cofactor.

The catalysed reaction is 2 reduced [2Fe-2S]-[ferredoxin] + NADP(+) + H(+) = 2 oxidized [2Fe-2S]-[ferredoxin] + NADPH. The chain is Ferredoxin--NADP reductase from Halalkalibacterium halodurans (strain ATCC BAA-125 / DSM 18197 / FERM 7344 / JCM 9153 / C-125) (Bacillus halodurans).